Consider the following 136-residue polypeptide: uncharacterized protein (136 aa).

It is found in the mitochondrion. This is an uncharacterized protein from Marchantia polymorpha (Common liverwort).